We begin with the raw amino-acid sequence, 154 residues long: UPF0178 protein Gbem_2221 (154 aa).

This sequence belongs to the UPF0178 family.

The polypeptide is UPF0178 protein Gbem_2221 (Citrifermentans bemidjiense (strain ATCC BAA-1014 / DSM 16622 / JCM 12645 / Bem) (Geobacter bemidjiensis)).